A 142-amino-acid polypeptide reads, in one-letter code: Mini-ribonuclease 3 (142 aa).

Asp-33 is a catalytic residue.

It belongs to the MrnC RNase family. As to quaternary structure, homodimer. It depends on Mg(2+) as a cofactor.

It is found in the cytoplasm. Its function is as follows. Involved in correct processing of both the 5' and 3' ends of 23S rRNA precursor. Processes 30S rRNA precursor transcript even in absence of ribonuclease 3 (Rnc); Rnc processes 30S rRNA into smaller rRNA precursors. The polypeptide is Mini-ribonuclease 3 (Thermoanaerobacter sp. (strain X514)).